A 2313-amino-acid chain; its full sequence is Serine/threonine-protein kinase smg-1 (2313 aa).

A compositionally biased stretch (basic and acidic residues) spans 779-791 (NRKSSDKKPKSTT). The segment at 779–798 (NRKSSDKKPKSTTEDVPPPA) is disordered. The FAT domain maps to 1045–1528 (ARERLQLVES…VFQVVSGAAS (484 aa)). The HEAT repeat unit spans residues 1478 to 1514 (VHVWKEILPQLFARLSHPSDHIRKTLVDLISRVCTAA). In terms of domain architecture, PI3K/PI4K catalytic spans 1746–2091 (VADNVTILPT…DTIELFQLRV (346 aa)). A G-loop region spans residues 1752-1758 (ILPTKTR). A catalytic loop region spans residues 1954–1962 (GLGDRHLDN). Residues 1974 to 1998 (HIDYNICFDKGKILRIPETVPFRLS) form an activation loop region. The FATC domain maps to 2281–2313 (RKLSPREEADVLIAEATSSANLAQMYEGWTAWV).

Belongs to the PI3/PI4-kinase family. Component of a post-splicing multiprotein NMD complex. It depends on Mn(2+) as a cofactor.

It is found in the cytoplasm. It catalyses the reaction L-seryl-[protein] + ATP = O-phospho-L-seryl-[protein] + ADP + H(+). It carries out the reaction L-threonyl-[protein] + ATP = O-phospho-L-threonyl-[protein] + ADP + H(+). Serine/threonine protein kinase involved in mRNA surveillance. Recognizes the substrate consensus sequence [ST]-Q. Involved in nonsense-mediated decay (NMD) of mRNAs containing premature stop codons by phosphorylating smg-2. This is Serine/threonine-protein kinase smg-1 (smg-1) from Caenorhabditis briggsae.